The primary structure comprises 128 residues: Small ribosomal subunit protein uS9 (128 aa).

Residues 107-128 are disordered; the sequence is RAVERKKPGRPKARKRFQFSKR. A compositionally biased stretch (basic residues) spans 113-128; sequence KPGRPKARKRFQFSKR.

Belongs to the universal ribosomal protein uS9 family.

The polypeptide is Small ribosomal subunit protein uS9 (Parabacteroides distasonis (strain ATCC 8503 / DSM 20701 / CIP 104284 / JCM 5825 / NCTC 11152)).